Reading from the N-terminus, the 297-residue chain is UDP-3-O-acyl-N-acetylglucosamine deacetylase (297 aa).

His79, His238, and Asp242 together coordinate Zn(2+). Residue His265 is the Proton donor of the active site.

This sequence belongs to the LpxC family. Zn(2+) is required as a cofactor.

It carries out the reaction a UDP-3-O-[(3R)-3-hydroxyacyl]-N-acetyl-alpha-D-glucosamine + H2O = a UDP-3-O-[(3R)-3-hydroxyacyl]-alpha-D-glucosamine + acetate. It functions in the pathway glycolipid biosynthesis; lipid IV(A) biosynthesis; lipid IV(A) from (3R)-3-hydroxytetradecanoyl-[acyl-carrier-protein] and UDP-N-acetyl-alpha-D-glucosamine: step 2/6. In terms of biological role, catalyzes the hydrolysis of UDP-3-O-myristoyl-N-acetylglucosamine to form UDP-3-O-myristoylglucosamine and acetate, the committed step in lipid A biosynthesis. This is UDP-3-O-acyl-N-acetylglucosamine deacetylase from Blochmanniella pennsylvanica (strain BPEN).